A 194-amino-acid chain; its full sequence is Xanthine phosphoribosyltransferase (194 aa).

Leu-20 and Asn-27 together coordinate xanthine. 128-132 provides a ligand contact to 5-phospho-alpha-D-ribose 1-diphosphate; the sequence is ANGQA. Lys-156 contributes to the xanthine binding site.

This sequence belongs to the purine/pyrimidine phosphoribosyltransferase family. Xpt subfamily. In terms of assembly, homodimer.

The protein localises to the cytoplasm. It catalyses the reaction XMP + diphosphate = xanthine + 5-phospho-alpha-D-ribose 1-diphosphate. Its pathway is purine metabolism; XMP biosynthesis via salvage pathway; XMP from xanthine: step 1/1. In terms of biological role, converts the preformed base xanthine, a product of nucleic acid breakdown, to xanthosine 5'-monophosphate (XMP), so it can be reused for RNA or DNA synthesis. This chain is Xanthine phosphoribosyltransferase, found in Oceanobacillus iheyensis (strain DSM 14371 / CIP 107618 / JCM 11309 / KCTC 3954 / HTE831).